We begin with the raw amino-acid sequence, 96 residues long: Glutamyl-tRNA(Gln) amidotransferase subunit C (96 aa).

Belongs to the GatC family. In terms of assembly, heterotrimer of A, B and C subunits.

It carries out the reaction L-glutamyl-tRNA(Gln) + L-glutamine + ATP + H2O = L-glutaminyl-tRNA(Gln) + L-glutamate + ADP + phosphate + H(+). The enzyme catalyses L-aspartyl-tRNA(Asn) + L-glutamine + ATP + H2O = L-asparaginyl-tRNA(Asn) + L-glutamate + ADP + phosphate + 2 H(+). Allows the formation of correctly charged Asn-tRNA(Asn) or Gln-tRNA(Gln) through the transamidation of misacylated Asp-tRNA(Asn) or Glu-tRNA(Gln) in organisms which lack either or both of asparaginyl-tRNA or glutaminyl-tRNA synthetases. The reaction takes place in the presence of glutamine and ATP through an activated phospho-Asp-tRNA(Asn) or phospho-Glu-tRNA(Gln). In Neisseria meningitidis serogroup B (strain ATCC BAA-335 / MC58), this protein is Glutamyl-tRNA(Gln) amidotransferase subunit C.